Consider the following 134-residue polypeptide: Fatty acid-binding protein 5 (134 aa).

Residues 23–33 (KELGVGMAMRK) carry the Nuclear localization signal motif. Hexadecanoate contacts are provided by residues R109 and 129–131 (RVY). N-eicosanoyl ethanolamine-binding residues include R109 and Y131. Residue 129 to 131 (RVY) participates in (9Z,12Z)-octadecadienoate binding.

It belongs to the calycin superfamily. Fatty-acid binding protein (FABP) family. Monomer.

It is found in the cytoplasm. The protein localises to the nucleus. It localises to the synapse. Its subcellular location is the postsynaptic density. The protein resides in the secreted. The enzyme catalyses hexadecanoate(out) = hexadecanoate(in). It catalyses the reaction (9Z,12Z)-octadecadienoate(out) = (9Z,12Z)-octadecadienoate(in). The catalysed reaction is (9Z)-octadecenoate(out) = (9Z)-octadecenoate(in). Its function is as follows. Intracellular carrier for long-chain fatty acids and related active lipids, such as endocannabinoids, that regulate the metabolism and actions of the ligands they bind. In addition to the cytosolic transport, selectively delivers specific fatty acids from the cytosol to the nucleus, wherein they activate nuclear receptors. Delivers retinoic acid to the nuclear receptor peroxisome proliferator-activated receptor delta; which promotes proliferation and survival. May also serve as a synaptic carrier of endocannabinoid at central synapses and thus controls retrograde endocannabinoid signaling. Modulates inflammation by regulating PTGES induction via NF-kappa-B activation, and prostaglandin E2 (PGE2) biosynthesis during inflammation. Has the highest binding affinity for docosahexaenoic acid (DHA) and decreasing relative affinity for eicosapentaenoic acid (EPA), alpha-linolenic acid (ALA), oleic acid, palmitic acid, linoleic acid and stearic acid, respectively. In Pygoscelis papua (Gentoo penguin), this protein is Fatty acid-binding protein 5.